A 707-amino-acid polypeptide reads, in one-letter code: Heat shock protein hsp88 (707 aa).

Positions 662–692 are enriched in basic and acidic residues; sequence EAEKAAKKAEEEARKAKEAAEKAAQEGAKDD. Residues 662–707 form a disordered region; sequence EAEKAAKKAEEEARKAKEAAEKAAQEGAKDDEMTDADAPKPVVEEA.

Belongs to the heat shock protein 70 family. Binds hsp30 independent of temperature or substrate. In terms of processing, the N-terminus is blocked.

The protein localises to the cytoplasm. In Neurospora crassa (strain ATCC 24698 / 74-OR23-1A / CBS 708.71 / DSM 1257 / FGSC 987), this protein is Heat shock protein hsp88 (hsp88).